Reading from the N-terminus, the 180-residue chain is 2-oxoglutarate dehydrogenase, mitochondrial (180 aa).

Residue lysine 14 is modified to N6-succinyllysine. Residue serine 40 is modified to Phosphoserine. Thiamine diphosphate is bound at residue arginine 64.

This sequence belongs to the alpha-ketoglutarate dehydrogenase family. In terms of assembly, homodimer. The 2-oxoglutarate dehydrogenase complex is composed of OGDH (2-oxoglutarate dehydrogenase; E1), DLST (dihydrolipoamide succinyltransferase; E2) and DLD (dihydrolipoamide dehydrogenase; E3). It contains multiple copies of the three enzymatic components (E1, E2 and E3). In the nucleus, the 2-oxoglutarate dehydrogenase complex associates with KAT2A. Interacts with ABHD11; this interaction maintains the functional lipoylation of the 2-oxoglutarate dehydrogenase complex. Thiamine diphosphate serves as cofactor. It depends on Mg(2+) as a cofactor.

The protein resides in the mitochondrion matrix. It is found in the nucleus. The enzyme catalyses N(6)-[(R)-lipoyl]-L-lysyl-[protein] + 2-oxoglutarate + H(+) = N(6)-[(R)-S(8)-succinyldihydrolipoyl]-L-lysyl-[protein] + CO2. Its activity is regulated as follows. Calcium ions and ADP stimulate, whereas ATP and NADH reduce catalytic activity. Its function is as follows. 2-oxoglutarate dehydrogenase (E1) component of the 2-oxoglutarate dehydrogenase complex (OGDHC), which mediates the decarboxylation of alpha-ketoglutarate. The 2-oxoglutarate dehydrogenase complex catalyzes the overall conversion of 2-oxoglutarate to succinyl-CoA and CO(2). The 2-oxoglutarate dehydrogenase complex is mainly active in the mitochondrion. A fraction of the 2-oxoglutarate dehydrogenase complex also localizes in the nucleus and is required for lysine succinylation of histones: associates with KAT2A on chromatin and provides succinyl-CoA to histone succinyltransferase KAT2A. This chain is 2-oxoglutarate dehydrogenase, mitochondrial, found in Mesocricetus auratus (Golden hamster).